A 604-amino-acid polypeptide reads, in one-letter code: Glutamine--fructose-6-phosphate aminotransferase [isomerizing] (604 aa).

The active-site Nucleophile; for GATase activity is Cys2. A Glutamine amidotransferase type-2 domain is found at 2-216 (CGIVGYVGFR…DGDVVRLTRE (215 aa)). 2 SIS domains span residues 281 to 420 (LALD…GRGA) and 453 to 594 (VAEK…VDQP). Catalysis depends on Lys599, which acts as the For Fru-6P isomerization activity.

Homodimer.

The protein resides in the cytoplasm. It catalyses the reaction D-fructose 6-phosphate + L-glutamine = D-glucosamine 6-phosphate + L-glutamate. Its function is as follows. Catalyzes the first step in hexosamine metabolism, converting fructose-6P into glucosamine-6P using glutamine as a nitrogen source. The chain is Glutamine--fructose-6-phosphate aminotransferase [isomerizing] from Thermus thermophilus (strain ATCC 27634 / DSM 579 / HB8).